A 240-amino-acid polypeptide reads, in one-letter code: Ribonuclease PH (240 aa).

Residues Arg-87 and 125–127 contribute to the phosphate site; that span reads GTR.

It belongs to the RNase PH family. In terms of assembly, homohexameric ring arranged as a trimer of dimers.

It carries out the reaction tRNA(n+1) + phosphate = tRNA(n) + a ribonucleoside 5'-diphosphate. Functionally, phosphorolytic 3'-5' exoribonuclease that plays an important role in tRNA 3'-end maturation. Removes nucleotide residues following the 3'-CCA terminus of tRNAs; can also add nucleotides to the ends of RNA molecules by using nucleoside diphosphates as substrates, but this may not be physiologically important. Probably plays a role in initiation of 16S rRNA degradation (leading to ribosome degradation) during starvation. The chain is Ribonuclease PH from Pseudomonas fluorescens (strain Pf0-1).